A 180-amino-acid chain; its full sequence is Large ribosomal subunit protein uL5 (180 aa).

Belongs to the universal ribosomal protein uL5 family. Part of the 50S ribosomal subunit; part of the 5S rRNA/L5/L18/L25 subcomplex. Contacts the 5S rRNA and the P site tRNA. Forms a bridge to the 30S subunit in the 70S ribosome.

Functionally, this is one of the proteins that bind and probably mediate the attachment of the 5S RNA into the large ribosomal subunit, where it forms part of the central protuberance. In the 70S ribosome it contacts protein S13 of the 30S subunit (bridge B1b), connecting the 2 subunits; this bridge is implicated in subunit movement. Contacts the P site tRNA; the 5S rRNA and some of its associated proteins might help stabilize positioning of ribosome-bound tRNAs. In Rubrobacter xylanophilus (strain DSM 9941 / JCM 11954 / NBRC 16129 / PRD-1), this protein is Large ribosomal subunit protein uL5.